Consider the following 147-residue polypeptide: Hemoglobin subunit beta-2 (147 aa).

Position 2 is an N-acetylvaline (Val-2). In terms of domain architecture, Globin spans 3 to 147 (HLTDAEKATV…VASALAHKYH (145 aa)). A Phosphoserine modification is found at Ser-13. An N6-succinyllysine modification is found at Lys-18. Phosphoserine occurs at positions 51 and 53. Residues His-64 and His-93 each contribute to the heme b site. At Arg-105 the chain carries Asymmetric dimethylarginine. Position 124 is a phosphothreonine (Thr-124). Cys-126 carries the phosphoserine; in variant Ser-126 modification.

Belongs to the globin family. In terms of assembly, heterotetramer of two alpha chains and two beta chains. As to expression, red blood cells.

Its function is as follows. Involved in oxygen transport from the lung to the various peripheral tissues. This chain is Hemoglobin subunit beta-2, found in Rattus norvegicus (Rat).